The chain runs to 674 residues: 1,4-alpha-glucan branching enzyme GlgB 1 (674 aa).

Aspartate 336 serves as the catalytic Nucleophile. Catalysis depends on glutamate 389, which acts as the Proton donor.

This sequence belongs to the glycosyl hydrolase 13 family. GlgB subfamily. As to quaternary structure, monomer.

It carries out the reaction Transfers a segment of a (1-&gt;4)-alpha-D-glucan chain to a primary hydroxy group in a similar glucan chain.. Its pathway is glycan biosynthesis; glycogen biosynthesis. Its function is as follows. Catalyzes the formation of the alpha-1,6-glucosidic linkages in glycogen by scission of a 1,4-alpha-linked oligosaccharide from growing alpha-1,4-glucan chains and the subsequent attachment of the oligosaccharide to the alpha-1,6 position. The protein is 1,4-alpha-glucan branching enzyme GlgB 1 of Clostridium perfringens (strain SM101 / Type A).